We begin with the raw amino-acid sequence, 532 residues long: MSVALASEYQLVQNAQLPQRWSQSARKSLAILEATARKEATAQMEAAGGSFCGQFPVDPAFKVLSLEYSAPNPDIARAIRRVDSVPNPPLPSHVVAIQSTAVDADLSLAMGVSLTPGRHTSYLVDARALQQSNSAAVAARKADGDKWGPACDEMFRGCRCVTGQEVVFYTAVKEPAGEVEGGEGSLFKPSFDGPAFRPSWGELSGKATGVVACVLQVPIGKETDIICAEYDNLVSKGQFATVDRFGGDHTVNMTGNALIQNDGKAISKGYAVAHRARVTSNVYGKANDVSLQRLAETVWSVVEKRLSFMPAYRDLVITEQGKPFMLGATATNIISLTENQGVMLHLDTDDGVWTIILWFHRHSGIIAGGEFVLPSLGISFQPLDFTIVVFAANTIVHGTRPLQTTGKIIRWGSSHFLRFKDVNALAQLGAAYGVDELDAKQRDQLEEVDAANSKDGVGAARRVASCMAAERKAAIEAQKAACVRGVVMNPCTGRMPSLLFWQVWRKPPALAVRANAVAGKKRAAADVDFCGA.

335 to 337 (SLT) provides a ligand contact to L-ascorbate. Positions 345, 347, and 397 each coordinate Fe cation. 397–399 (HGT) is an L-ascorbate binding site.

Belongs to the TET family. Requires Fe(2+) as cofactor.

It localises to the nucleus. It carries out the reaction a 5-methyl-2'-deoxycytidine in DNA + L-ascorbate + O2 = a (8S,9S)-5-glyceryl-2'-deoxycytidine in DNA + glyoxylate + CO2. The enzyme catalyses a 5-methyl-2'-deoxycytidine in DNA + L-ascorbate + O2 = a (8S,9R)-5-glyceryl-2'-deoxycytidine in DNA + glyoxylate + CO2. Dioxygenase that catalyzes DNA modification by mediating the conversion of the modified genomic base 5-methylcytosine (5mC) into 5-glyceryl-methylcytosine (5gmC). Catalyzes the conjugation of a glyceryl moiety from L-ascorbate (vitamin C) to the methyl group of 5mC through a carbon-carbon bond. 5gmC DNA modification may be required during photosynthesis as an epigenetic mark that couteracts DNA methylation. The sequence is that of 5-methylcytosine-modifying enzyme 1 from Chlamydomonas reinhardtii (Chlamydomonas smithii).